A 545-amino-acid chain; its full sequence is CTP synthase (545 aa).

An amidoligase domain region spans residues 1–266 (MTKNYIFITG…DDYICNYFKL (266 aa)). Residue Ser-14 participates in CTP binding. Ser-14 provides a ligand contact to UTP. Residues 15-20 (SLGKGI) and Asp-72 each bind ATP. Mg(2+)-binding residues include Asp-72 and Glu-140. CTP-binding positions include 147–149 (DIE), 187–192 (KTKPTQ), and Lys-223. UTP contacts are provided by residues 187–192 (KTKPTQ) and Lys-223. ATP is bound at residue 239–241 (KDV). One can recognise a Glutamine amidotransferase type-1 domain in the interval 291-543 (VIGIIGKYIK…IKSAGKHKKN (253 aa)). Residue Gly-352 participates in L-glutamine binding. Cys-379 functions as the Nucleophile; for glutamine hydrolysis in the catalytic mechanism. Residues 380-383 (LGMQ), Glu-403, and Arg-471 each bind L-glutamine. Residues His-516 and Glu-518 contribute to the active site.

Belongs to the CTP synthase family. As to quaternary structure, homotetramer.

The catalysed reaction is UTP + L-glutamine + ATP + H2O = CTP + L-glutamate + ADP + phosphate + 2 H(+). It catalyses the reaction L-glutamine + H2O = L-glutamate + NH4(+). The enzyme catalyses UTP + NH4(+) + ATP = CTP + ADP + phosphate + 2 H(+). The protein operates within pyrimidine metabolism; CTP biosynthesis via de novo pathway; CTP from UDP: step 2/2. With respect to regulation, allosterically activated by GTP, when glutamine is the substrate; GTP has no effect on the reaction when ammonia is the substrate. The allosteric effector GTP functions by stabilizing the protein conformation that binds the tetrahedral intermediate(s) formed during glutamine hydrolysis. Inhibited by the product CTP, via allosteric rather than competitive inhibition. Catalyzes the ATP-dependent amination of UTP to CTP with either L-glutamine or ammonia as the source of nitrogen. Regulates intracellular CTP levels through interactions with the four ribonucleotide triphosphates. The protein is CTP synthase of Buchnera aphidicola subsp. Acyrthosiphon pisum (strain 5A).